The sequence spans 268 residues: Interleukin-2 receptor subunit alpha (268 aa).

The N-terminal stretch at 1–21 is a signal peptide; the sequence is MEPCLLMWGILTFITVSGYTT. A Sushi 1 domain is found at 22-81; that stretch reads DLCDDDPPNLKHATFKALTYKTGTVLNCDCERGFRRISSYMHCTGNSSHASWENKCRCKS. The Extracellular segment spans residues 22–237; it reads DLCDDDPPNL…ESFIFTTEYQ (216 aa). 3 disulfides stabilise this stretch: Cys24–Cys64, Cys49–Cys77, and Cys51–Cys79. Asn67 carries N-linked (GlcNAc...) asparagine glycosylation. The tract at residues 83-112 is disordered; sequence SPENRKGKVTTKPEEQKGENPTEMQSQTPP. Over residues 85-102 the composition is skewed to basic and acidic residues; that stretch reads ENRKGKVTTKPEEQKGEN. In terms of domain architecture, Sushi 2 spans 120–183; the sequence is GHCREPPPWE…WTQPPLKCIS (64 aa). 2 disulfide bridges follow: Cys122–Cys165 and Cys149–Cys181. The tract at residues 186-213 is disordered; that stretch reads QFPDDEELQASTDAPAGRDTSSPFITTS. Residues 204-213 show a composition bias toward polar residues; that stretch reads DTSSPFITTS. The helical transmembrane segment at 238–258 threads the bilayer; it reads IAVASCVLLLISIVLLSGLTW. Residues 259–268 are Cytoplasmic-facing; the sequence is QRRRRKSRTI.

As to quaternary structure, non-covalent dimer of an alpha and a beta subunit. IL2R exists in 3 different forms: a high affinity dimer, an intermediate affinity monomer (beta subunit), and a low affinity monomer (alpha subunit). The high and intermediate affinity forms also associate with a gamma subunit.

It is found in the membrane. Receptor for interleukin-2. The receptor is involved in the regulation of immune tolerance by controlling regulatory T cells (TREGs) activity. TREGs suppress the activation and expansion of autoreactive T-cells. In Canis lupus familiaris (Dog), this protein is Interleukin-2 receptor subunit alpha (IL2RA).